The following is a 110-amino-acid chain: Quaternary ammonium compound-resistance protein QacE (110 aa).

4 helical membrane-spanning segments follow: residues 1–21, 30–50, 58–78, and 85–105; these read MKGW…TSAL, LAPS…LSLV, VAYA…AWLL, and AWGF…NLLS.

It belongs to the drug/metabolite transporter (DMT) superfamily. Small multidrug resistance (SMR) (TC 2.A.7.1) family.

Its subcellular location is the cell membrane. Functionally, multidrug exporter. Is implicated for the resistance to bacteriocidal quaternary ammonium compounds. This is Quaternary ammonium compound-resistance protein QacE (qacE) from Escherichia coli.